A 183-amino-acid polypeptide reads, in one-letter code: ATP synthase subunit delta (183 aa).

Belongs to the ATPase delta chain family. F-type ATPases have 2 components, F(1) - the catalytic core - and F(0) - the membrane proton channel. F(1) has five subunits: alpha(3), beta(3), gamma(1), delta(1), epsilon(1). F(0) has three main subunits: a(1), b(2) and c(10-14). The alpha and beta chains form an alternating ring which encloses part of the gamma chain. F(1) is attached to F(0) by a central stalk formed by the gamma and epsilon chains, while a peripheral stalk is formed by the delta and b chains.

Its subcellular location is the cell inner membrane. F(1)F(0) ATP synthase produces ATP from ADP in the presence of a proton or sodium gradient. F-type ATPases consist of two structural domains, F(1) containing the extramembraneous catalytic core and F(0) containing the membrane proton channel, linked together by a central stalk and a peripheral stalk. During catalysis, ATP synthesis in the catalytic domain of F(1) is coupled via a rotary mechanism of the central stalk subunits to proton translocation. Its function is as follows. This protein is part of the stalk that links CF(0) to CF(1). It either transmits conformational changes from CF(0) to CF(1) or is implicated in proton conduction. This is ATP synthase subunit delta from Oleidesulfovibrio alaskensis (strain ATCC BAA-1058 / DSM 17464 / G20) (Desulfovibrio alaskensis).